We begin with the raw amino-acid sequence, 354 residues long: Protein C42 (354 aa).

Positions 349–352 (KRKK) match the Nuclear localization signal motif.

This sequence belongs to the baculoviridae C42 protein family.

Its subcellular location is the host nucleus. This is Protein C42 from Orgyia pseudotsugata (Douglas-fir tussock moth).